The primary structure comprises 160 residues: Ribosomal RNA large subunit methyltransferase H (160 aa).

S-adenosyl-L-methionine contacts are provided by residues Leu-77, Gly-109, and 128–133 (FSRMTF).

It belongs to the RNA methyltransferase RlmH family. In terms of assembly, homodimer.

Its subcellular location is the cytoplasm. It catalyses the reaction pseudouridine(1915) in 23S rRNA + S-adenosyl-L-methionine = N(3)-methylpseudouridine(1915) in 23S rRNA + S-adenosyl-L-homocysteine + H(+). Its function is as follows. Specifically methylates the pseudouridine at position 1915 (m3Psi1915) in 23S rRNA. The protein is Ribosomal RNA large subunit methyltransferase H of Pelotomaculum thermopropionicum (strain DSM 13744 / JCM 10971 / SI).